Here is a 449-residue protein sequence, read N- to C-terminus: Allantoinase (449 aa).

Zn(2+) contacts are provided by His-61, His-63, Lys-148, His-184, His-240, and Asp-313. Lys-148 carries the post-translational modification N6-carboxylysine.

It belongs to the metallo-dependent hydrolases superfamily. Allantoinase family. In terms of assembly, homotetramer. Requires Zn(2+) as cofactor. In terms of processing, carboxylation allows a single lysine to coordinate two zinc ions.

The catalysed reaction is (S)-allantoin + H2O = allantoate + H(+). The protein operates within nitrogen metabolism; (S)-allantoin degradation; allantoate from (S)-allantoin: step 1/1. Its function is as follows. Catalyzes the conversion of allantoin (5-ureidohydantoin) to allantoic acid by hydrolytic cleavage of the five-member hydantoin ring. The polypeptide is Allantoinase (Desulfitobacterium hafniense (strain DSM 10664 / DCB-2)).